We begin with the raw amino-acid sequence, 252 residues long: Ribosomal RNA small subunit methyltransferase J (252 aa).

S-adenosyl-L-methionine contacts are provided by residues 104 to 105 (RD), 120 to 121 (ER), and D174.

Belongs to the methyltransferase superfamily. RsmJ family.

Its subcellular location is the cytoplasm. The enzyme catalyses guanosine(1516) in 16S rRNA + S-adenosyl-L-methionine = N(2)-methylguanosine(1516) in 16S rRNA + S-adenosyl-L-homocysteine + H(+). In terms of biological role, specifically methylates the guanosine in position 1516 of 16S rRNA. The chain is Ribosomal RNA small subunit methyltransferase J from Mannheimia succiniciproducens (strain KCTC 0769BP / MBEL55E).